Here is a 37-residue protein sequence, read N- to C-terminus: MKVRASVKKMCRNCKVIKRNRVVRVICADPRHKQRQG.

The protein belongs to the bacterial ribosomal protein bL36 family.

In Francisella tularensis subsp. mediasiatica (strain FSC147), this protein is Large ribosomal subunit protein bL36.